A 214-amino-acid chain; its full sequence is Large ribosomal subunit protein bL25 (214 aa).

A disordered region spans residues 193 to 214 (PRAAAEEEDTGAEGDVEAADAE). Residues 198-214 (EEEDTGAEGDVEAADAE) show a composition bias toward acidic residues.

Belongs to the bacterial ribosomal protein bL25 family. CTC subfamily. In terms of assembly, part of the 50S ribosomal subunit; part of the 5S rRNA/L5/L18/L25 subcomplex. Contacts the 5S rRNA. Binds to the 5S rRNA independently of L5 and L18.

Its function is as follows. This is one of the proteins that binds to the 5S RNA in the ribosome where it forms part of the central protuberance. The sequence is that of Large ribosomal subunit protein bL25 from Nitrosococcus oceani (strain ATCC 19707 / BCRC 17464 / JCM 30415 / NCIMB 11848 / C-107).